Here is a 173-residue protein sequence, read N- to C-terminus: Transmembrane protein 278 (173 aa).

The span at 1–14 (MSEQERETEEDEGV) shows a compositional bias: acidic residues. The tract at residues 1–25 (MSEQERETEEDEGVASDTAPMLPRR) is disordered. 3 consecutive transmembrane segments (helical) span residues 31-51 (HISVLAPILATRGLGTLVLSG), 53-73 (ALVGFLLHLLLPGTVFLLVLL), and 107-127 (AALIVFGLLSLPPLVVLAAAA). A disordered region spans residues 141–165 (DPARTPAPRRPPRSSGDLADGHPDE).

The protein belongs to the TMEM88 family.

The protein localises to the membrane. The chain is Transmembrane protein 278 (Tmem278) from Mus musculus (Mouse).